Consider the following 365-residue polypeptide: NAD(P)H-quinone oxidoreductase subunit 1, chloroplastic (365 aa).

8 helical membrane passes run 27–47, 98–118, 129–149, 165–185, 203–223, 253–273, 302–322, and 345–365; these read VWIF…VLVI, FSIG…VIPF, IGIF…LMSG, AAQS…ISLL, FWGW…ISSL, FGLF…FVTI, IFGT…FLFI, and FLLP…LFSL.

Belongs to the complex I subunit 1 family. NDH is composed of at least 16 different subunits, 5 of which are encoded in the nucleus.

It is found in the plastid. Its subcellular location is the chloroplast thylakoid membrane. The catalysed reaction is a plastoquinone + NADH + (n+1) H(+)(in) = a plastoquinol + NAD(+) + n H(+)(out). The enzyme catalyses a plastoquinone + NADPH + (n+1) H(+)(in) = a plastoquinol + NADP(+) + n H(+)(out). In terms of biological role, NDH shuttles electrons from NAD(P)H:plastoquinone, via FMN and iron-sulfur (Fe-S) centers, to quinones in the photosynthetic chain and possibly in a chloroplast respiratory chain. The immediate electron acceptor for the enzyme in this species is believed to be plastoquinone. Couples the redox reaction to proton translocation, and thus conserves the redox energy in a proton gradient. In Arabis hirsuta (Hairy rock-cress), this protein is NAD(P)H-quinone oxidoreductase subunit 1, chloroplastic.